A 228-amino-acid polypeptide reads, in one-letter code: GrpE protein homolog, mitochondrial (228 aa).

A compositionally biased stretch (basic and acidic residues) spans 46–57 (DEAKSEESKENN). Positions 46-66 (DEAKSEESKENNEDLTEEQSE) are disordered.

This sequence belongs to the GrpE family. Component of the PAM complex, at least composed of SSC1 (mtHsp70), MGE1, TIM44, PAM16/TIM16, PAM17 and PAM18/TIM14. Interacts with SSQ1. The N-terminus is blocked.

The protein localises to the mitochondrion matrix. Functionally, essential component of the PAM complex, a complex required for the translocation of transit peptide-containing proteins from the inner membrane into the mitochondrial matrix in an ATP-dependent manner. Seems to control the nucleotide-dependent binding of SSC1 to substrate proteins and the association of SSC1 with TIM44. This Saccharomyces cerevisiae (strain ATCC 204508 / S288c) (Baker's yeast) protein is GrpE protein homolog, mitochondrial (MGE1).